The following is a 411-amino-acid chain: Proteasome-activating nucleotidase 2 (411 aa).

A coiled-coil region spans residues 35–75 (IVAVNGELQAQLDDVEARREELREEVNRLQRENETLKTASL). Residues 196–201 (GTGKTM) and histidine 335 each bind ATP. Positions 408 to 411 (SYIQ) are docks into pockets in the proteasome alpha-ring to cause gate opening.

Belongs to the AAA ATPase family. As to quaternary structure, homohexamer. The hexameric complex has a two-ring architecture resembling a top hat that caps the 20S proteasome core at one or both ends. Upon ATP-binding, the C-terminus of PAN interacts with the alpha-rings of the proteasome core by binding to the intersubunit pockets.

It localises to the cytoplasm. In terms of biological role, ATPase which is responsible for recognizing, binding, unfolding and translocation of substrate proteins into the archaeal 20S proteasome core particle. Is essential for opening the gate of the 20S proteasome via an interaction with its C-terminus, thereby allowing substrate entry and access to the site of proteolysis. Thus, the C-termini of the proteasomal ATPase function like a 'key in a lock' to induce gate opening and therefore regulate proteolysis. Unfolding activity requires energy from ATP hydrolysis, whereas ATP binding alone promotes ATPase-20S proteasome association which triggers gate opening, and supports translocation of unfolded substrates. This Halobacterium salinarum (strain ATCC 700922 / JCM 11081 / NRC-1) (Halobacterium halobium) protein is Proteasome-activating nucleotidase 2.